A 436-amino-acid chain; its full sequence is Bystin (436 aa).

At T145 the chain carries Phosphothreonine. 2 positions are modified to phosphoserine: S148 and S152.

The protein belongs to the bystin family.

It localises to the nucleus. It is found in the nucleolus. In terms of biological role, required for processing of 20S pre-rRNA precursor and biogenesis of 40S ribosomal subunits. The chain is Bystin (bys) from Drosophila melanogaster (Fruit fly).